The primary structure comprises 324 residues: tRNA dimethylallyltransferase (324 aa).

Position 15-22 (15-22) interacts with ATP; sequence GPTATGKS. 17–22 contacts substrate; the sequence is TATGKS. Positions 40 to 43 are interaction with substrate tRNA; the sequence is DSAQ.

This sequence belongs to the IPP transferase family. Monomer. Mg(2+) serves as cofactor.

It catalyses the reaction adenosine(37) in tRNA + dimethylallyl diphosphate = N(6)-dimethylallyladenosine(37) in tRNA + diphosphate. Catalyzes the transfer of a dimethylallyl group onto the adenine at position 37 in tRNAs that read codons beginning with uridine, leading to the formation of N6-(dimethylallyl)adenosine (i(6)A). The sequence is that of tRNA dimethylallyltransferase from Moorella thermoacetica (strain ATCC 39073 / JCM 9320).